A 61-amino-acid chain; its full sequence is Large ribosomal subunit protein eL24 (61 aa).

Zn(2+) contacts are provided by C7, C10, C33, and C37. The C4-type zinc finger occupies C7–C37.

This sequence belongs to the eukaryotic ribosomal protein eL24 family. As to quaternary structure, part of the 50S ribosomal subunit. Forms a cluster with proteins L3 and L14. Requires Zn(2+) as cofactor.

Functionally, binds to the 23S rRNA. This chain is Large ribosomal subunit protein eL24, found in Saccharolobus islandicus (strain Y.N.15.51 / Yellowstone #2) (Sulfolobus islandicus).